The sequence spans 1484 residues: Cystic fibrosis transmembrane conductance regulator (1484 aa).

At 1–77 the chain is on the cytoplasmic side; it reads MQRSPLEKAS…KLINALRRCF (77 aa). A helical membrane pass occupies residues 78–98; that stretch reads FWRFMFYGIILYLGEVTKSVQ. Positions 81-365 constitute an ABC transmembrane type-1 1 domain; the sequence is FMFYGIILYL…WAVQTWYDSL (285 aa). Residues 99-122 lie on the Extracellular side of the membrane; the sequence is PLLLGRIIASYDPDNKEERSIAIY. The chain crosses the membrane as a helical span at residues 123–146; it reads LGIGLCLLFVMRTLLLHPAIFGLH. Residues 147–195 are Cytoplasmic-facing; the sequence is RIGMQMRIAMFSLIYKKTLKLSSRVLDKISIGQLVSLLSNNLNKFDEGL. Residues 196–216 form a helical membrane-spanning segment; sequence ALAHFVWIAPLQVTLLMGLLW. At 217 to 222 the chain is on the extracellular side; it reads DLLQAS. The chain crosses the membrane as a helical span at residues 223–243; that stretch reads AFCGLAFLIVLALFQAGLGRM. At 244-298 the chain is on the cytoplasmic side; sequence MMKYRDQRAGKINERLVITSEMIENIQSVKAYCWEEAMEKMIESIRQTELKLTRK. The helical transmembrane segment at 299-319 threads the bilayer; that stretch reads AAYVRYFNSSAFFFSGFFVVF. The Extracellular segment spans residues 320–339; it reads LSVLPYALIKTIVLRKIFTT. Residues 340-358 traverse the membrane as a helical segment; the sequence is ISFCIVLRMAVTRQFPWAV. Over 359–860 the chain is Cytoplasmic; the sequence is QTWYDSLGAI…YLRYVTIHKS (502 aa). ATP contacts are provided by residues W401, S434, 458–465, and Q493; that span reads GSTGAGKT. The ABC transporter 1 domain maps to 423-646; the sequence is NADNSLFFSN…RPDFSSKLMG (224 aa). A lipid anchor (S-palmitoyl cysteine) is attached at C524. S549 and S660 each carry phosphoserine. A disordered R region region spans residues 654–833; it reads SAERRNSIIT…EEINEEDLKE (180 aa). Phosphoserine; by PKA is present on S670. S686 carries the phosphoserine modification. A Glycyl lysine isopeptide (Lys-Gly) (interchain with G-Cter in ubiquitin) cross-link involves residue K688. A phosphoserine mark is found at S700 and S712. T717 carries the phosphothreonine modification. Phosphoserine occurs at positions 737, 769, 792, 797, and 815. A helical transmembrane segment spans residues 861–881; sequence LVFVLIWCLVIFLAEVAISLV. An ABC transmembrane type-1 2 domain is found at 861-1157; that stretch reads LVFVLIWCLV…AVNSSIDVDS (297 aa). The Extracellular segment spans residues 882-920; it reads VLWLLKKTASQDKGNSTQSINSSYTVIFTSTSTYYVFYI. N-linked (GlcNAc...) asparagine glycosylation is found at N896 and N902. The chain crosses the membrane as a discontinuously helical span at residues 921 to 941; the sequence is YVGVADTLLALGFFRGLPLVH. The Cytoplasmic segment spans residues 942-992; it reads TLITVSKILHHKMLHAVLQAPMSTLNALKAGGILNRFSKDIAILDDLLPLT. The helical transmembrane segment at 993–1013 threads the bilayer; that stretch reads IFDFVQLLLIVIGAVTVVSAL. Residues 1014–1015 are Extracellular-facing; it reads QP. The chain crosses the membrane as a helical span at residues 1016 to 1036; the sequence is YIFLATVPVIAAFIMLRAYFL. Over 1037–1097 the chain is Cytoplasmic; it reads HTSQQLKQLE…TANWFLYLST (61 aa). The helical transmembrane segment at 1098–1118 threads the bilayer; it reads LRWFQMRMEIIFVIFFIAITF. Topologically, residues 1119–1132 are extracellular; the sequence is ISILTTGEGVGAVG. A helical membrane pass occupies residues 1133–1153; it reads IILTLAMNIMGTLQWAVNSSI. The Cytoplasmic portion of the chain corresponds to 1154–1484; it reads DVDSLMRSVS…TEEEVQETRL (331 aa). The ABC transporter 2 domain maps to 1214 to 1447; the sequence is MTVKDLTAKY…KSLFRQAISP (234 aa). ATP contacts are provided by residues Y1223 and 1248–1255; that span reads GRTGSGKS. The segment at 1390-1484 is interaction with GORASP2; it reads RTLKQAFADC…TEEEVQETRL (95 aa). The S-palmitoyl cysteine moiety is linked to residue C1399. Phosphoserine occurs at positions 1448 and 1460. A compositionally biased stretch (basic residues) spans 1456-1465; sequence HRNSSKHKSR. Positions 1456–1484 are disordered; it reads HRNSSKHKSRSQIAALKEETEEEVQETRL. A compositionally biased stretch (acidic residues) spans 1474-1484; that stretch reads ETEEEVQETRL. The PDZ-binding signature appears at 1482–1484; it reads TRL.

The protein belongs to the ABC transporter superfamily. ABCC family. CFTR transporter (TC 3.A.1.202) subfamily. In terms of assembly, monomer; does not require oligomerization for channel activity. May form oligomers in the membrane. Interacts with SLC26A3, SLC26A6 and NHERF1. Interacts with SHANK2. Interacts with MYO6. Interacts (via C-terminus) with GOPC (via PDZ domain); this promotes CFTR internalization and thereby decreases channel activity. Interacts with SLC4A7 through NHERF1. Found in a complex with MYO5B and RAB11A. Interacts with ANO1. Interacts with SLC26A8. Interacts with AHCYL1; the interaction increases CFTR activity. Interacts with CSE1L. The core-glycosylated form interacts with GORASP2 (via PDZ GRASP-type 1 domain) in respone to ER stress. Interacts with MARCHF2; the interaction leads to CFTR ubiqtuitination and degradation. Interacts with ADGRG2. In terms of processing, N-glycosylated. Phosphorylated; cAMP treatment promotes phosphorylation and activates the channel. Dephosphorylation decreases the ATPase activity (in vitro). Phosphorylation at PKA sites activates the channel. Phosphorylation at PKC sites enhances the response to phosphorylation by PKA. Phosphorylated by AMPK; this inhibits channel activity. Post-translationally, ubiquitinated, leading to its degradation in the lysosome. Deubiquitination by USP10 in early endosomes enhances its endocytic recycling to the cell membrane. Ubiquitinated by RNF185 during ER stress. Ubiquitinated by MARCHF2.

Its subcellular location is the apical cell membrane. The protein localises to the early endosome membrane. It localises to the cell membrane. The protein resides in the recycling endosome membrane. It is found in the endoplasmic reticulum membrane. Its subcellular location is the nucleus. It carries out the reaction ATP + H2O + closed Cl(-) channel = ADP + phosphate + open Cl(-) channel.. The catalysed reaction is chloride(in) = chloride(out). It catalyses the reaction hydrogencarbonate(in) = hydrogencarbonate(out). The enzyme catalyses ATP + H2O = ADP + phosphate + H(+). In terms of biological role, epithelial ion channel that plays an important role in the regulation of epithelial ion and water transport and fluid homeostasis. Mediates the transport of chloride ions across the cell membrane. Possesses an intrinsic ATPase activity and utilizes ATP to gate its channel; the passive flow of anions through the channel is gated by cycles of ATP binding and hydrolysis by the ATP-binding domains. The ion channel is also permeable to HCO(3)(-); selectivity depends on the extracellular chloride concentration. Exerts its function also by modulating the activity of other ion channels and transporters. Contributes to the regulation of the pH and the ion content of the epithelial fluid layer. Modulates the activity of the epithelial sodium channel (ENaC) complex, in part by regulating the cell surface expression of the ENaC complex. May regulate bicarbonate secretion and salvage in epithelial cells by regulating the transporter SLC4A7. Can inhibit the chloride channel activity of ANO1. Plays a role in the chloride and bicarbonate homeostasis during sperm epididymal maturation and capacitation. In Mustela putorius furo (European domestic ferret), this protein is Cystic fibrosis transmembrane conductance regulator.